The following is a 374-amino-acid chain: MSQSTNVTELARANVRALTPYMSARRLGGNGDVWLNANEYPLATEYQLTAQTFNRYPECQPKLVIERYAAYAGLATDQVLVSRGADEGIELLIRAFCEPAQDAILFCPPTYGMYAVSAETFGVELRTVPTKADWQLDLPAIKASLDRVKLIYICSPNNPTGNLINPADLRAVLELAQGRAIVAIDEAYIEFCPQASVSSWLKDYPNLVILRTLSKAFALAGLRCGFTLANSDIIQLLLKVIAPYPLSTPVADIAAQALSPLGLEQMRQRVSEVTANRAWLQNALQECACVEQVFTSESNYLLARFTASSSVFKTLWDQGIILRDQNKQPSLSNCLRITIGTRQECERVIAALAPLPGVDSPNSTNTASLRKETI.

K215 bears the N6-(pyridoxal phosphate)lysine mark.

Belongs to the class-II pyridoxal-phosphate-dependent aminotransferase family. Histidinol-phosphate aminotransferase subfamily. In terms of assembly, homodimer. Pyridoxal 5'-phosphate is required as a cofactor.

It catalyses the reaction L-histidinol phosphate + 2-oxoglutarate = 3-(imidazol-4-yl)-2-oxopropyl phosphate + L-glutamate. Its pathway is amino-acid biosynthesis; L-histidine biosynthesis; L-histidine from 5-phospho-alpha-D-ribose 1-diphosphate: step 7/9. The protein is Histidinol-phosphate aminotransferase of Yersinia enterocolitica serotype O:8 / biotype 1B (strain NCTC 13174 / 8081).